The following is an 85-amino-acid chain: Probable oxaloacetate decarboxylase gamma chain (85 aa).

A helical membrane pass occupies residues Ile15–Ile35.

Belongs to the OadG family. In terms of assembly, heterotrimer of an alpha, a beta and a gamma subunit. It depends on Na(+) as a cofactor.

The protein resides in the cell membrane. The enzyme catalyses oxaloacetate + 2 Na(+)(in) + H(+) = pyruvate + 2 Na(+)(out) + CO2. Its function is as follows. Catalyzes the decarboxylation of oxaloacetate coupled to Na(+) translocation. The protein is Probable oxaloacetate decarboxylase gamma chain of Actinobacillus pleuropneumoniae serotype 5b (strain L20).